The primary structure comprises 105 residues: D-galactoside-specific lectin (105 aa).

An SUEL-type lectin domain is found at valine 13–serine 103.

In terms of assembly, homodimer; disulfide-linked.

It is found in the cytoplasm. This protein binds D-galactoside. May have an important role in the activation of eggs (triggered by fertilization), or in their subsequent differentiation. The dimeric form is essential for hemagglutination activity. This chain is D-galactoside-specific lectin, found in Heliocidaris crassispina (Sea urchin).